We begin with the raw amino-acid sequence, 172 residues long: MKQQLLLLEDVDGLGRSGDIVTARPGYVRNYLMPQKKAVIAGAGTLRLQAKLKEERLLRAAEDRAESEKLAEALRDVILEFQVRVDPDNNMYGSVTISDIIDEAAKKNIILTRKNFPHSHYAIKNLGKKSVPLKLKEDVTATLFVEVSSESSYVAVLNQQPTQEEPAAEESN.

It belongs to the bacterial ribosomal protein bL9 family.

Binds to the 23S rRNA. The protein is Large ribosomal subunit protein bL9 of Chlamydia caviae (strain ATCC VR-813 / DSM 19441 / 03DC25 / GPIC) (Chlamydophila caviae).